The following is a 261-amino-acid chain: Potassium/proton antiporter CemA (261 aa).

The next 3 membrane-spanning stretches (helical) occupy residues 138–158, 186–206, and 221–241; these read IISH…CLIL, ILLV…ELMI, and IISG…KYWI.

It belongs to the CemA family.

It localises to the plastid. The protein resides in the chloroplast inner membrane. The catalysed reaction is K(+)(in) + H(+)(out) = K(+)(out) + H(+)(in). Contributes to K(+)/H(+) antiport activity by supporting proton efflux to control proton extrusion and homeostasis in chloroplasts in a light-dependent manner to modulate photosynthesis. Prevents excessive induction of non-photochemical quenching (NPQ) under continuous-light conditions. Indirectly promotes efficient inorganic carbon uptake into chloroplasts. This Cryptomeria japonica (Japanese cedar) protein is Potassium/proton antiporter CemA.